The chain runs to 467 residues: Receptor-like cytosolic serine/threonine-protein kinase RBK1 (467 aa).

Positions 1-24 (MAVEDNKNSESKNHQEVELHRNDL) are enriched in basic and acidic residues. The disordered stretch occupies residues 1-73 (MAVEDNKNSE…PFSNTTKTVS (73 aa)). The segment covering 40–71 (SDSDNSSSSCSSCSSDDKSSSTSSPFSNTTKT) has biased composition (low complexity). Residue Thr142 is modified to Phosphothreonine. Residues 153-430 (FNPENMIGKG…LRGEDGPAEL (278 aa)) enclose the Protein kinase domain. ATP-binding positions include 159–167 (IGKGGHAEV) and Lys181. The active-site Proton acceptor is the Asp278. Ser282 is modified (phosphoserine). Residue Thr318 is modified to Phosphothreonine. Tyr326 carries the phosphotyrosine modification.

It belongs to the protein kinase superfamily. Ser/Thr protein kinase family. In terms of assembly, interacts with ARAC5 and ARAC10. As to expression, mostly expressed in vasculature, hydathode endothem, leaf mesophyll cells and trichomes.

It is found in the cytoplasm. It localises to the endomembrane system. Its subcellular location is the nucleus. It carries out the reaction L-seryl-[protein] + ATP = O-phospho-L-seryl-[protein] + ADP + H(+). It catalyses the reaction L-threonyl-[protein] + ATP = O-phospho-L-threonyl-[protein] + ADP + H(+). This Arabidopsis thaliana (Mouse-ear cress) protein is Receptor-like cytosolic serine/threonine-protein kinase RBK1 (RBK1).